The following is a 380-amino-acid chain: Chaperone protein DnaJ (380 aa).

One can recognise a J domain in the interval 5-69 (DYYEILGVSK…QKRAHYDQFG (65 aa)). Residues 135–217 (GKETDIEIPR…CGGTGRVKKR (83 aa)) form a CR-type zinc finger. Zn(2+) contacts are provided by C148, C151, C165, C168, C191, C194, C205, and C208. CXXCXGXG motif repeat units follow at residues 148–155 (CDTCHGTG), 165–172 (CSYCHGTG), 191–198 (CPYCGGTG), and 205–212 (CTTCGGTG).

This sequence belongs to the DnaJ family. In terms of assembly, homodimer. The cofactor is Zn(2+).

Its subcellular location is the cytoplasm. Functionally, participates actively in the response to hyperosmotic and heat shock by preventing the aggregation of stress-denatured proteins and by disaggregating proteins, also in an autonomous, DnaK-independent fashion. Unfolded proteins bind initially to DnaJ; upon interaction with the DnaJ-bound protein, DnaK hydrolyzes its bound ATP, resulting in the formation of a stable complex. GrpE releases ADP from DnaK; ATP binding to DnaK triggers the release of the substrate protein, thus completing the reaction cycle. Several rounds of ATP-dependent interactions between DnaJ, DnaK and GrpE are required for fully efficient folding. Also involved, together with DnaK and GrpE, in the DNA replication of plasmids through activation of initiation proteins. In Geobacillus sp. (strain WCH70), this protein is Chaperone protein DnaJ.